A 271-amino-acid chain; its full sequence is Putative F-box protein L165 (271 aa).

One can recognise an F-box domain in the interval 4-49 (ICELFDDVILEIMNLLSDTDKINFMFCCSRFYYFIDLVYYNDIYDY). A disordered region spans residues 251 to 271 (NIPKIVPKNTHYRNSSKKYRY). Residues 260-271 (THYRNSSKKYRY) show a composition bias toward basic residues.

In Acanthamoeba polyphaga mimivirus (APMV), this protein is Putative F-box protein L165.